Reading from the N-terminus, the 107-residue chain is Ferredoxin (107 aa).

4Fe-4S ferredoxin-type domains follow at residues 2–30 and 31–60; these read TYVV…YEGE and FMLV…PETP. Cys9 and Cys17 together coordinate [3Fe-4S] cluster. The [4Fe-4S] cluster site is built by Cys21, Cys40, Cys43, and Cys46. Cys50 provides a ligand contact to [3Fe-4S] cluster.

It depends on [4Fe-4S] cluster as a cofactor. [3Fe-4S] cluster serves as cofactor.

Its function is as follows. Ferredoxins are iron-sulfur proteins that transfer electrons in a wide variety of metabolic reactions. This chain is Ferredoxin (fdxA), found in Rickettsia bellii (strain RML369-C).